The sequence spans 99 residues: Accessory protein p12I (99 aa).

An SH3-binding motif is present at residues 4-11; sequence RLLSPLSP. The chain crosses the membrane as a helical span at residues 12 to 32; sequence LALTALLLFLLSPGEVSGLLL. Positions 33 to 38 match the SH3-binding motif; the sequence is RPLPAP. Residues 48–68 traverse the membrane as a helical segment; the sequence is ILSNLLFLLFLPLFFSLPLLL. 2 consecutive short sequence motifs (SH3-binding) follow at residues 70–77 and 88–93; these read PSLPITMR and RAPSQP.

This sequence belongs to the HTLV-1 accessory protein p12I family. As to quaternary structure, p12I is a homodimer. Interacts with human CANX, CALR, ATP6V0C, IL2RB, IL2RG. Binds to MHC-I heavy chains HLA-A2, HLA-B7 and HLA-Cw4. In terms of processing, ubiquitinated; a fraction of P12I is degraded via the ubiquitin system.

The protein localises to the host endoplasmic reticulum membrane. Its subcellular location is the host Golgi apparatus. It localises to the host cis-Golgi network membrane. P12I is a modulator of T-lymphocyte proliferation and immune function and may contribute to establish a persistent infection. Binds and down-modulates cell surface expression of interleukin-2 receptors IL2RB and IL2RG. Also down-modulates cell surface MHC-I molecules by binding to free immature MHC-I heavy chains in the ER and targeting them to the proteasome for degradation. Binding to IL2RB mediates recruitment of JAK1 and JAK3. As a result of this interaction, p12I increases DNA-binding and transcriptional activity of STAT5. The sequence is that of Accessory protein p12I from Homo sapiens (Human).